A 117-amino-acid chain; its full sequence is Prefoldin subunit beta (117 aa).

Belongs to the prefoldin subunit beta family. As to quaternary structure, heterohexamer of two alpha and four beta subunits.

It localises to the cytoplasm. In terms of biological role, molecular chaperone capable of stabilizing a range of proteins. Seems to fulfill an ATP-independent, HSP70-like function in archaeal de novo protein folding. This Methanosarcina mazei (strain ATCC BAA-159 / DSM 3647 / Goe1 / Go1 / JCM 11833 / OCM 88) (Methanosarcina frisia) protein is Prefoldin subunit beta.